Here is a 607-residue protein sequence, read N- to C-terminus: MVKRNHKFQSGEGAQYLTRKAAMRKLQLSMQDFRRLCILKGIYPREPKHRAIAQRGSTDIKILYHKKDITFLLHEPIVWTLRDRKIFNRRIAAAKGKGNNLLKNVRMANYPEIKLDHIIKERFPTFVDAIKELDDCMTLLFLFSTFPAMKTVTRDITSMARRLSIEFMHYCIASKALRKVFVSIKGYYFQAEIKGELVTWIVPHYYPYQPQRKEYVDFKIMKSFADFFTVMAGFVNFRLYNSINLVYPPQFSVSLDSEESRSNEDTFISERIAALNSDLLRSDQMGTEEEDDQIDLDLLDGDKDSEQVRKLREDAVSLNKLKNLFKGLKFFINREVPREPLVFILRCFGGRASWDRNLFVGATFDESDETITHQIVDRPSLPKQYISRDYVQPQWIFDCVNQRKLLPVNKYLIGAVLPPHLSPFNRDDAIYVPPEEAALRDGVELDAGARNGEERISDDEDEDAEQRQQVQLDYALVKAFREEKTEALNSGALEEAPEEEDDDEEAPEEDEQTKQKNEKKKKMAVVSGKIFKENPSEQKKLTKQEEALRARMVKSRHKKLYRKMLEKQKKQTKEANLLKEKRQQIDKKQRVEQTQKRKTQRKEILAK.

Residues lysine 320 to isoleucine 413 form the BRCT domain. Residues glutamate 486–lysine 607 are disordered. Over residues glutamate 495–glutamate 511 the composition is skewed to acidic residues. The span at isoleucine 530–arginine 549 shows a compositional bias: basic and acidic residues. The span at arginine 551–arginine 562 shows a compositional bias: basic residues. The segment covering lysine 563–lysine 607 has biased composition (basic and acidic residues).

Belongs to the pescadillo family.

Its subcellular location is the nucleus. The protein localises to the nucleolus. It is found in the nucleoplasm. Its function is as follows. Required for maturation of ribosomal RNAs and formation of the large ribosomal subunit. This Culex quinquefasciatus (Southern house mosquito) protein is Pescadillo homolog.